The following is a 1227-amino-acid chain: MMDNDDALLNNGGPQSGAETVYGTEDNNMVMSEKNEQVVSIVQQLAGSIYQEFERMINRYDEDVVKNLMPLLVNVLECLDASYRINQEQDVEVELLREDNEQLVTQYEREKSARKQSEQKLLEAEDLAEQENKELATRLESVESIVRMLELKHKNSLEHASRLEEREADLKKEYNKLHERYTELFKNHVDYMERTKMLMGSTHSQMSTASERMDVSRARLNPVARSSGPVSYGFASLENSVMLDTETICSVGSQSDDSGPPSLQNELDNLSGTLERGAATDALQQQHHATSPQSPDSSPVVPNVPTNVGRSTTKKEQRSDNNLYQELSFQDNEESEENEIVTGSWVHPGEYASSANDNYFGMGKEVENLIMENNELLATKNALNIVKDDLIVKVDELTGEVEIVREELNAMQQSRTKLRQRISELEDELKKAKEQVKQQNTEQEENDVPLAQRKRFTRVEMAMVLMERNQYKERLMELQEAVRLTEILRASRTVDNLDRKSKQSIWKYFSNLFTPSNRPTERVADGLGGGPMFRHTGGGSPAHSHGSPSRGSGGGDNRLALTSGQPPVHPASAGLANALIMPKDYAEEGSSERISARRREQYRQLRAHVQKEDGRLHAYGWSLPINKASQEANPNRHSGGVPVPVYCNPLAEASPHMKVFCAAGVNLHGGFTKNGQSLIPANSPYAPKSTLKIAEITSPTADQSMEALDRQMARVSLETLEPETQLSSFVWICTSTHAASTVSVVDANQSATVLDAFPICASHLLCIASVQGAMESDYALLEQSEVVKAGEMLQRPGEGTELLGKVEFVRVKPKSDDEQNSNEKQQQEEEEAKEATEKSNEQLPAVSAEEPLGNVEAIKIRQPLPGAPQRLSTDGNQTNNNNNSSSSSNLLFATKSLNPILETKDRDEPAMSSVGPTMWLGAQDGWLYVHSSVGRWHECLHRVLLPDAVLAIVHVEARVVVALANAQLAVFRRQTDGQWDLNSYHLVTLGDRNHSIRCLCVAGERIWAAHRNKIFIVDPVSLNIVHSLDAHPRKESQVRQMAATGAGVWVSIRLDSTLRLYNTHTFEHKQDVDIEPYVSKMLGTGKLGFSFVRITALMVSCNRLWIGTSNGVIISVPLAEVQPKSSSDPHGQMPLCCMANAQLSFHGHRDAVKFFVSVPMLQQPNLNGGLTFTNKRPDMLVMCGGEGYIDFRINDNDMENSIQLEPNQTIENRGDKSYLIVWHVSQR.

Residues 1-22 (MMDNDDALLNNGGPQSGAETVY) are disordered. The 89-residue stretch at 25 to 113 (EDNNMVMSEK…VTQYEREKSA (89 aa)) folds into the RH1 domain. A coiled-coil region spans residues 84–191 (RINQEQDVEV…TELFKNHVDY (108 aa)). The tract at residues 281-323 (DALQQQHHATSPQSPDSSPVVPNVPTNVGRSTTKKEQRSDNNL) is disordered. Residues 290 to 308 (TSPQSPDSSPVVPNVPTNV) are compositionally biased toward low complexity. Positions 363–489 (GKEVENLIME…EAVRLTEILR (127 aa)) form a coiled coil. Positions 453–524 (RKRFTRVEMA…PSNRPTERVA (72 aa)) constitute an RH2 domain. Disordered stretches follow at residues 517–572 (NRPT…HPAS), 804–851 (GKVE…AEEP), and 863–889 (PLPG…SSSN). The segment covering 526–540 (GLGGGPMFRHTGGGS) has biased composition (gly residues). Residues 541–550 (PAHSHGSPSR) are compositionally biased toward low complexity. Positions 807–817 (EFVRVKPKSDD) are enriched in basic and acidic residues. Residues 814 to 849 (KSDDEQNSNEKQQQEEEEAKEATEKSNEQLPAVSAE) are a coiled coil. A compositionally biased stretch (low complexity) spans 879-889 (NNNNNSSSSSN).

Belongs to the JIP scaffold family. As to quaternary structure, forms homo- and heterooligomeric complexes. Binds the TPR motif-containing C-terminal of kinesin light chain, Klc. Pre-assembled syd scaffolding complexes are then transported as a cargo of kinesin, to the required subcellular location.

The protein resides in the cytoplasm. Functionally, the JNK-interacting protein (JIP) group of scaffold proteins selectively mediates JNK-signaling by aggregating specific components of the MAPK cascade to form a functional JNK signaling module. May function as a regulator of vesicle transport, through interactions with the JNK-signaling components and motor proteins. Syd is required for efficient kinesin-I mediated axonal transport. The polypeptide is JNK-interacting protein 3 (syd) (Drosophila melanogaster (Fruit fly)).